Here is a 259-residue protein sequence, read N- to C-terminus: UPF0014 membrane protein slr1647 (259 aa).

7 consecutive transmembrane segments (helical) span residues 4 to 24 (ALIE…GAAI), 34 to 54 (LTGQ…VVGY), 55 to 75 (FLAV…LAIM), 98 to 118 (LWLS…VVII), 128 to 148 (YLIP…SLAG), 195 to 215 (MMVV…LAGG), and 225 to 245 (ILIM…VTAT).

The protein belongs to the UPF0014 family.

It localises to the cell membrane. This is UPF0014 membrane protein slr1647 from Synechocystis sp. (strain ATCC 27184 / PCC 6803 / Kazusa).